We begin with the raw amino-acid sequence, 270 residues long: Undecaprenyl-diphosphatase 1 (270 aa).

7 helical membrane-spanning segments follow: residues 5-25 (YYVL…PIPI), 42-62 (IEGF…VLLI), 89-109 (FFFI…GVLF), 117-137 (LKGV…LWII), 192-212 (FSFL…ITDI), 220-240 (TLFV…YISL), and 250-270 (GNLK…LIFL).

The protein belongs to the UppP family.

Its subcellular location is the cell membrane. The catalysed reaction is di-trans,octa-cis-undecaprenyl diphosphate + H2O = di-trans,octa-cis-undecaprenyl phosphate + phosphate + H(+). In terms of biological role, catalyzes the dephosphorylation of undecaprenyl diphosphate (UPP). Confers resistance to bacitracin. This Bacillus cereus (strain ATCC 14579 / DSM 31 / CCUG 7414 / JCM 2152 / NBRC 15305 / NCIMB 9373 / NCTC 2599 / NRRL B-3711) protein is Undecaprenyl-diphosphatase 1.